A 611-amino-acid chain; its full sequence is DNA mismatch repair protein MutL (611 aa).

Residues 364 to 384 (NVNSKPSKYRPATSPTVPKYT) form a disordered region.

Belongs to the DNA mismatch repair MutL/HexB family.

Its function is as follows. This protein is involved in the repair of mismatches in DNA. It is required for dam-dependent methyl-directed DNA mismatch repair. May act as a 'molecular matchmaker', a protein that promotes the formation of a stable complex between two or more DNA-binding proteins in an ATP-dependent manner without itself being part of a final effector complex. In Rickettsia bellii (strain OSU 85-389), this protein is DNA mismatch repair protein MutL.